Here is a 301-residue protein sequence, read N- to C-terminus: Protein SCO2, mitochondrial (301 aa).

The chain crosses the membrane as a helical span at residues 82–98 (ATIALLLLSGGTYAYLS). One can recognise a Thioredoxin domain in the interval 101–284 (RRLLETEKEA…IREQIQAYVP (184 aa)). Cu cation contacts are provided by C154, C158, and H245.

The protein belongs to the SCO1/2 family.

Its subcellular location is the mitochondrion inner membrane. In terms of biological role, acts as a copper chaperone, transporting copper to the Cu(A) site on the cytochrome c oxidase subunit II (COX2). This is Protein SCO2, mitochondrial (SCO2) from Saccharomyces cerevisiae (strain ATCC 204508 / S288c) (Baker's yeast).